A 351-amino-acid chain; its full sequence is (S)-coclaurine N-methyltransferase (351 aa).

S-adenosyl-L-methionine-binding positions include 91–92 (QS), 126–134 (VLDLGCGLG), 130–132 (GCG), and 153–158 (TSSVEQ). Residue Cys-326 is part of the active site.

This sequence belongs to the CFA/CMAS family. Expressed in roots, stems, flower buds and at lower levels, in leaves. Restricted to sieve elements of the phloem adjacent or proximal to laticifers.

The protein resides in the cytoplasm. The catalysed reaction is (S)-coclaurine + S-adenosyl-L-methionine = (S)-N-methylcoclaurine + S-adenosyl-L-homocysteine + H(+). The protein operates within alkaloid biosynthesis; (S)-reticuline biosynthesis; (S)-reticuline from (S)-norcoclaurine: step 2/4. Its function is as follows. Involved in the biosynthesis of benzylisoquinoline alkaloids. N-methyltransferase methylating (S)-coclaurine. 4'-O-methylcoclaurine and norlaudanine can also be used as substrates. This chain is (S)-coclaurine N-methyltransferase, found in Papaver somniferum (Opium poppy).